The chain runs to 181 residues: Copper-resistant cuproprotein CopI (181 aa).

The first 24 residues, 1 to 24 (MFPRRLLPASLIVLGVLFGASAQA), serve as a signal peptide directing secretion. The Cu(2+) site is built by H79, C163, H168, and M173.

Belongs to the CopI family.

The protein localises to the periplasm. In terms of biological role, involved in copper tolerance. This chain is Copper-resistant cuproprotein CopI, found in Pseudomonas aeruginosa (strain ATCC 15692 / DSM 22644 / CIP 104116 / JCM 14847 / LMG 12228 / 1C / PRS 101 / PAO1).